The primary structure comprises 258 residues: DNA repair protein RecO (258 aa).

The protein belongs to the RecO family.

In terms of biological role, involved in DNA repair and RecF pathway recombination. The sequence is that of DNA repair protein RecO from Lactiplantibacillus plantarum (strain ATCC BAA-793 / NCIMB 8826 / WCFS1) (Lactobacillus plantarum).